The sequence spans 287 residues: Phospholipid phosphatase 2 (287 aa).

The Cytoplasmic portion of the chain corresponds to 1–4 (MERR). The chain crosses the membrane as a helical span at residues 5–25 (WVFVLLDVLCVLVAALPCAIL). Residues 26–51 (TFVNTPYKRGFYCGDDSIRYPYRPDT) lie on the Lumenal side of the membrane. Residues 52–72 (ITHGLMAGVIITATVILVSAG) form a helical membrane-spanning segment. At 73–87 (EAYLVYTDRLYSRSD) the chain is on the cytoplasmic side. The chain crosses the membrane as a helical span at residues 88–108 (FNNYLAALYKVVGTFLFGAAV). Topologically, residues 109-161 (SQSLTDLAKYMTGRLRPNFLAVCDPDWSRVNCSAYVQVEVCRGSSANVTESRL) are lumenal. Residues 117-125 (KYMTGRLRP) form a phosphatase sequence motif I region. 2 N-linked (GlcNAc...) asparagine glycosylation sites follow: Asn-139 and Asn-155. A helical transmembrane segment spans residues 162 to 182 (SFYSGHSSFGMYCMVFLALYV). The segment at 164-167 (YSGH) is phosphatase sequence motif II. The active-site Proton donors is the His-167. The Cytoplasmic portion of the chain corresponds to 183-193 (QARLCWKWARL). The chain crosses the membrane as a helical span at residues 194 to 211 (LRPTVQFFLVAFALYVGY). Residues 212-218 (TRVSDHK) are Lumenal-facing. The phosphatase sequence motif III stretch occupies residues 212 to 223 (TRVSDHKHHWSD). His-219 acts as the Nucleophile in catalysis. A helical transmembrane segment spans residues 219–239 (HHWSDVLVGLLQGALVASLTV). Topologically, residues 240 to 287 (RYISDFFKARPPQHCPEEEDLERKPSLSLTLALGETDCNHYGYPVSSS) are cytoplasmic.

The protein belongs to the PA-phosphatase related phosphoesterase family. In terms of assembly, forms functional homodimers and homooligomers. Can also form heterooligomers with PLPP1 and PLPP3. N-glycosylated.

The protein resides in the membrane. Its subcellular location is the cell membrane. The protein localises to the early endosome membrane. It is found in the endoplasmic reticulum membrane. It carries out the reaction a 1,2-diacyl-sn-glycero-3-phosphate + H2O = a 1,2-diacyl-sn-glycerol + phosphate. It catalyses the reaction 1,2-dihexadecanoyl-sn-glycero-3-phosphate + H2O = 1,2-dihexadecanoyl-sn-glycerol + phosphate. The enzyme catalyses 1,2-di-(9Z-octadecenoyl)-sn-glycero-3-phosphate + H2O = 1,2-di-(9Z-octadecenoyl)-sn-glycerol + phosphate. The catalysed reaction is a monoacyl-sn-glycero-3-phosphate + H2O = a monoacylglycerol + phosphate. It carries out the reaction (9Z)-octadecenoyl-sn-glycero-3-phosphate + H2O = (9Z-octadecenoyl)-glycerol + phosphate. It catalyses the reaction sphing-4-enine 1-phosphate + H2O = sphing-4-enine + phosphate. The enzyme catalyses an N-acylsphing-4-enine 1-phosphate + H2O = an N-acylsphing-4-enine + phosphate. The catalysed reaction is N-(octanoyl)-sphing-4-enine-1-phosphate + H2O = N-octanoylsphing-4-enine + phosphate. It carries out the reaction N-(9Z-octadecenoyl)-ethanolamine phosphate + H2O = N-(9Z-octadecenoyl) ethanolamine + phosphate. It functions in the pathway lipid metabolism; phospholipid metabolism. Its activity is regulated as follows. Magnesium-independent phospholipid phosphatase. Insensitive to N-ethylmaleimide. In terms of biological role, magnesium-independent phospholipid phosphatase that catalyzes the dephosphorylation of a variety of glycerolipid and sphingolipid phosphate esters including phosphatidate/PA, lysophosphatidate/LPA, sphingosine 1-phosphate/S1P and ceramide 1-phosphate/C1P. Has no apparent extracellular phosphatase activity and therefore most probably acts intracellularly. Also acts on N-oleoyl ethanolamine phosphate/N-(9Z-octadecenoyl)-ethanolamine phosphate, a potential physiological compound. Through dephosphorylation of these bioactive lipid mediators produces new bioactive compounds and may regulate signal transduction in different cellular processes. Indirectly regulates, for instance, cell cycle G1/S phase transition through its phospholipid phosphatase activity. The chain is Phospholipid phosphatase 2 from Bos taurus (Bovine).